Consider the following 301-residue polypeptide: Acetylglutamate kinase (301 aa).

Substrate-binding positions include 72–73 (GG), arginine 94, and asparagine 199.

The protein belongs to the acetylglutamate kinase family. ArgB subfamily.

Its subcellular location is the cytoplasm. The enzyme catalyses N-acetyl-L-glutamate + ATP = N-acetyl-L-glutamyl 5-phosphate + ADP. The protein operates within amino-acid biosynthesis; L-arginine biosynthesis; N(2)-acetyl-L-ornithine from L-glutamate: step 2/4. Its function is as follows. Catalyzes the ATP-dependent phosphorylation of N-acetyl-L-glutamate. The protein is Acetylglutamate kinase of Bartonella quintana (strain Toulouse) (Rochalimaea quintana).